The sequence spans 371 residues: MEVEEAGAVQTGTGEAVVANERTKQCSAFASITGCDEAVAQCFLAENDWDMERAINSYFEPGVESTLQNKPAADLADPLKQEMHAVTSDACIDLTSDDLVATKSEAVTSNSSTVKQQEDESHFTFLTWNIDGLDESNVAERARAVCSCLALYTPDVVFLQEVIPPYCEYLKKRAVSYKIITGNEDEYFTAMMLKKSRVKLISQEIVPYPSTLMMRNLLVANVNISGNSICLMTSHLESTKDHSKERLKQLDTVLKKMMDAPPSATVIFGGDTNLRDQEVAKIGGLPNTILDVWEFLGKPEHCRYTWDTKLNNNLRACYTSRLRFDRILYRASMEGSQVIPQFLNLVGTEKLDCGRFPSDHWGLLCDFDIIL.

The tract at residues N129–L133 is interaction with 5' end of substrate DNA. Mg(2+) is bound by residues D131 and E161. Residues H235 to K240 are interaction with 5' end of substrate DNA. D271 acts as the Proton donor/acceptor in catalysis. The interval N273 to R275 is interaction with 5' end of substrate DNA.

This sequence belongs to the CCR4/nocturin family. TTRAP/TDP2 subfamily. Mg(2+) serves as cofactor. Mn(2+) is required as a cofactor.

It localises to the nucleus. The protein localises to the PML body. In terms of biological role, DNA repair enzyme that can remove a variety of covalent adducts from DNA through hydrolysis of a 5'-phosphodiester bond, giving rise to DNA with a free 5' phosphate. Catalyzes the hydrolysis of dead-end complexes between DNA and the topoisomerase 2 (top2) active site tyrosine residue. Hydrolyzes 5'-phosphoglycolates on protruding 5' ends on DNA double-strand breaks (DSBs) due to DNA damage by radiation and free radicals. This chain is Tyrosyl-DNA phosphodiesterase 2 (tdp2), found in Xenopus laevis (African clawed frog).